Reading from the N-terminus, the 337-residue chain is Phenylalanine--tRNA ligase alpha subunit (337 aa).

A Mg(2+)-binding site is contributed by Glu252.

This sequence belongs to the class-II aminoacyl-tRNA synthetase family. Phe-tRNA synthetase alpha subunit type 1 subfamily. As to quaternary structure, tetramer of two alpha and two beta subunits. It depends on Mg(2+) as a cofactor.

The protein localises to the cytoplasm. The enzyme catalyses tRNA(Phe) + L-phenylalanine + ATP = L-phenylalanyl-tRNA(Phe) + AMP + diphosphate + H(+). This is Phenylalanine--tRNA ligase alpha subunit from Francisella tularensis subsp. novicida (strain U112).